A 331-amino-acid polypeptide reads, in one-letter code: Ribosomal RNA small subunit methyltransferase H (331 aa).

Residues G48–H50, D67, D115, and Q122 each bind S-adenosyl-L-methionine. A disordered region spans residues R297–A331. The segment covering G298–R312 has biased composition (basic and acidic residues).

This sequence belongs to the methyltransferase superfamily. RsmH family.

It is found in the cytoplasm. The catalysed reaction is cytidine(1402) in 16S rRNA + S-adenosyl-L-methionine = N(4)-methylcytidine(1402) in 16S rRNA + S-adenosyl-L-homocysteine + H(+). Functionally, specifically methylates the N4 position of cytidine in position 1402 (C1402) of 16S rRNA. The polypeptide is Ribosomal RNA small subunit methyltransferase H (Micrococcus luteus (strain ATCC 4698 / DSM 20030 / JCM 1464 / CCM 169 / CCUG 5858 / IAM 1056 / NBRC 3333 / NCIMB 9278 / NCTC 2665 / VKM Ac-2230) (Micrococcus lysodeikticus)).